We begin with the raw amino-acid sequence, 104 residues long: uncharacterized protein (104 aa).

Positions R55–P104 are disordered.

It localises to the plastid. This is an uncharacterized protein from Euglena longa (Euglenophycean alga).